We begin with the raw amino-acid sequence, 439 residues long: COBRA-like protein 7 (439 aa).

Residues 1-22 (MDVDQLILFVFVCCLSSRFADA) form the signal peptide. Residues asparagine 138, asparagine 181, asparagine 186, asparagine 232, asparagine 312, and asparagine 346 are each glycosylated (N-linked (GlcNAc...) asparagine). The GPI-anchor amidated asparagine moiety is linked to residue asparagine 412. A propeptide spans 413 to 439 (GGPDSRVSAAQLIASSCLLLPFIFLIM) (removed in mature form).

It belongs to the COBRA family.

Its subcellular location is the cell membrane. Involved in determining the orientation of cell expansion, probably by playing an important role in cellulose deposition. May act by recruiting cellulose synthesizing complexes to discrete positions on the cell surface. This Oryza sativa subsp. japonica (Rice) protein is COBRA-like protein 7 (BC1LP1).